A 348-amino-acid chain; its full sequence is Ferredoxin--NADP reductase (348 aa).

Residues Thr-26, Glu-45, Gln-53, Tyr-58, Ala-98, Phe-133, Asp-299, and Ser-340 each coordinate FAD.

This sequence belongs to the ferredoxin--NADP reductase type 2 family. Homodimer. FAD is required as a cofactor.

It catalyses the reaction 2 reduced [2Fe-2S]-[ferredoxin] + NADP(+) + H(+) = 2 oxidized [2Fe-2S]-[ferredoxin] + NADPH. The protein is Ferredoxin--NADP reductase of Prosthecochloris aestuarii (strain DSM 271 / SK 413).